A 60-amino-acid polypeptide reads, in one-letter code: MKFSVLVFILGLVLLLALSSATEMEENARACGSFMWKCSERLPCCQEYVCSPQWKWCQNP.

An N-terminal signal peptide occupies residues Met1–Ala21. Residues Thr22–Arg29 constitute a propeptide that is removed on maturation. Disulfide bonds link Cys31–Cys45, Cys38–Cys50, and Cys44–Cys57.

This sequence belongs to the neurotoxin 10 (Hwtx-1) family. 63 (VsTx1) subfamily. As to expression, expressed by the venom gland.

It is found in the secreted. Functionally, inhibits sodium channels Nav1.7/SCN9A and potassium channels Kv11.1/KCNH2. Also binds the voltage-sensor domain of the potassium channel KvAP (from the archaeon Aeropyrum pernix) with very slow apparent binding kinetics and affects channel gating. Reaches its target by dynamically partitioning into anionic or zwitterionic headgroup lipid membranes. May bind to the open state of KvAP. The polypeptide is U1-theraphotoxin-Agm3a (Acanthoscurria gomesiana (Tarantula spider)).